A 318-amino-acid polypeptide reads, in one-letter code: Mitochondrial thiamine pyrophosphate carrier (318 aa).

Solcar repeat units follow at residues 13–106, 116–202, and 214–309; these read NSKL…LTEL, HQFS…LKRA, and TGNL…FCNL. The next 5 membrane-spanning stretches (helical) occupy residues 19 to 39, 87 to 107, 122 to 142, 173 to 193, and 220 to 240; these read AVAG…LDVI, ILSI…TELL, FVCG…VDVL, VFYK…GLQF, and LLCG…LDLI. The short motif at 241–246 is the Substrate recognition element; it reads KKRLQV. The chain crosses the membrane as a helical span at residues 293–313; that stretch reads ALSTGFMFFWYELFCNLFHCI.

The protein belongs to the mitochondrial carrier (TC 2.A.29) family.

The protein localises to the mitochondrion membrane. The catalysed reaction is thiamine phosphate(out) + thiamine diphosphate(in) = thiamine phosphate(in) + thiamine diphosphate(out). Functionally, mitochondrial transporter mediating uptake of thiamine diphosphate into mitochondria. It is not clear if the antiporter activity is affected by the membrane potential or by the proton electrochemical gradient. The polypeptide is Mitochondrial thiamine pyrophosphate carrier (Slc25a19) (Mus musculus (Mouse)).